A 294-amino-acid chain; its full sequence is 33 kDa chaperonin (294 aa).

Cystine bridges form between cysteine 238–cysteine 240 and cysteine 271–cysteine 274.

Belongs to the HSP33 family. In terms of processing, under oxidizing conditions two disulfide bonds are formed involving the reactive cysteines. Under reducing conditions zinc is bound to the reactive cysteines and the protein is inactive.

It localises to the cytoplasm. Redox regulated molecular chaperone. Protects both thermally unfolding and oxidatively damaged proteins from irreversible aggregation. Plays an important role in the bacterial defense system toward oxidative stress. This Thermoanaerobacter pseudethanolicus (strain ATCC 33223 / 39E) (Clostridium thermohydrosulfuricum) protein is 33 kDa chaperonin.